A 617-amino-acid polypeptide reads, in one-letter code: Dopamine beta-hydroxylase (617 aa).

At 1–16 the chain is on the cytoplasmic side; sequence MPALSRWASLPGPSMR. The helical; Signal-anchor for type II membrane protein transmembrane segment at 17 to 37 threads the bilayer; the sequence is EAAFMYSTAVAIFLVILVAAL. Over 38–617 the chain is Intragranular; the sequence is QGSAPRESPL…TVVSIGGGKG (580 aa). Positions 57–173 constitute a DOMON domain; it reads GSLELSWNVS…GTVHLVYGIL (117 aa). Asparagine 64 is a glycosylation site (N-linked (GlcNAc...) asparagine). 6 cysteine pairs are disulfide-bonded: cysteine 154-cysteine 596, cysteine 232-cysteine 283, cysteine 269-cysteine 295, cysteine 390-cysteine 503, cysteine 394-cysteine 565, and cysteine 466-cysteine 488. An N-linked (GlcNAc...) (complex) asparagine glycan is attached at asparagine 184. Tyrosine 230 is an active-site residue. Positions 262 and 263 each coordinate Cu(2+). Histidine 333 provides a ligand contact to Cu(2+). Asparagine 344 carries an N-linked (GlcNAc...) asparagine glycan. Histidine 412 is a catalytic residue. Histidine 412, histidine 414, and methionine 487 together coordinate Cu(2+). Asparagine 566 carries an N-linked (GlcNAc...) asparagine glycan. The disordered stretch occupies residues 590–617; the sequence is EEPTPQCPTSQGRSPAGPTVVSIGGGKG.

The protein belongs to the copper type II ascorbate-dependent monooxygenase family. In terms of assembly, homotetramer; composed of two disulfide-linked dimers. It depends on Cu(2+) as a cofactor. N-glycosylated. Post-translationally, proteolytic cleavage after the membrane-anchor leads to the release of the soluble form.

Its subcellular location is the cytoplasmic vesicle. It is found in the secretory vesicle lumen. It localises to the secretory vesicle. The protein resides in the chromaffin granule lumen. The protein localises to the secreted. Its subcellular location is the secretory vesicle membrane. It is found in the chromaffin granule membrane. The catalysed reaction is dopamine + 2 L-ascorbate + O2 = (R)-noradrenaline + 2 monodehydro-L-ascorbate radical + H2O. It participates in catecholamine biosynthesis; (R)-noradrenaline biosynthesis; (R)-noradrenaline from dopamine: step 1/1. In terms of biological role, catalyzes the hydroxylation of dopamine to noradrenaline (also known as norepinephrine), and is thus vital for regulation of these neurotransmitters. The sequence is that of Dopamine beta-hydroxylase (DBH) from Homo sapiens (Human).